Reading from the N-terminus, the 1407-residue chain is DNA-directed RNA polymerase subunit beta' (1407 aa).

The Zn(2+) site is built by Cys-70, Cys-72, Cys-85, and Cys-88. Mg(2+) contacts are provided by Asp-460, Asp-462, and Asp-464. Positions 814, 889, 896, and 899 each coordinate Zn(2+). The interval 1384-1407 (LVGRSTSSGTEVTSPSKDAIPLGG) is disordered. A compositionally biased stretch (polar residues) spans 1386–1399 (GRSTSSGTEVTSPS).

Belongs to the RNA polymerase beta' chain family. As to quaternary structure, the RNAP catalytic core consists of 2 alpha, 1 beta, 1 beta' and 1 omega subunit. When a sigma factor is associated with the core the holoenzyme is formed, which can initiate transcription. Requires Mg(2+) as cofactor. It depends on Zn(2+) as a cofactor.

The catalysed reaction is RNA(n) + a ribonucleoside 5'-triphosphate = RNA(n+1) + diphosphate. Its function is as follows. DNA-dependent RNA polymerase catalyzes the transcription of DNA into RNA using the four ribonucleoside triphosphates as substrates. The sequence is that of DNA-directed RNA polymerase subunit beta' from Xylella fastidiosa (strain Temecula1 / ATCC 700964).